The sequence spans 101 residues: Large ribosomal subunit protein bL21 (101 aa).

It belongs to the bacterial ribosomal protein bL21 family. Part of the 50S ribosomal subunit. Contacts protein L20.

In terms of biological role, this protein binds to 23S rRNA in the presence of protein L20. The sequence is that of Large ribosomal subunit protein bL21 from Thermus thermophilus (strain ATCC BAA-163 / DSM 7039 / HB27).